Consider the following 322-residue polypeptide: MGTNKPATLADLQKAINDISKDALSYLTAHKADVVTFAGQIEYAGYDAATLIGILKDKGGDTLAKDMTMCITMRYVRGTGFVRDVTKKVKVAAGSTEASTLVSRYGIVSSVGTNANAITLGRLAQLFPNVSHEVVRQISGVKMAVDSSDLGLTGCDNLLWDYVPQYIKLESETAPYCSTHSLSHILFVVHIIHSFQITKKTMPEGKKKERGLTKDIDMMKYTTGLLVITCKSKNLSDKKKEEGRKKVLDEFITNGKVKTTIFDALAGMSVNTISTYGNQTRLYLAQQSKLMKILAENTSKTATEVSGLVKEFFEDEAEGADD.

6 residues coordinate RNA: Tyr-43, Tyr-46, Val-76, Arg-122, Lys-240, and Ser-269.

It belongs to the tenuiviruses nucleocapsid protein family.

It localises to the virion. Its subcellular location is the host cytoplasm. Its function is as follows. Encapsidates the genome, protecting it from nucleases. The encapsidated genomic RNA is termed the nucleocapsid (NC), and serves as template for viral transcription and replication. The polypeptide is Nucleoprotein (Avena sativa (Oat)).